The primary structure comprises 359 residues: uncharacterized protein (359 aa).

Residue Gly-46–Ser-53 coordinates ATP.

Belongs to the archaeal ATPase family.

This is an uncharacterized protein from Methanocaldococcus jannaschii (strain ATCC 43067 / DSM 2661 / JAL-1 / JCM 10045 / NBRC 100440) (Methanococcus jannaschii).